Consider the following 329-residue polypeptide: Sulfate-binding protein (329 aa).

A signal peptide spans 1–19 (MNKWGVGLTFLLAATSVMA).

The protein belongs to the prokaryotic sulfate-binding protein family.

The protein localises to the periplasm. In terms of biological role, this protein specifically binds sulfate and is involved in its transmembrane transport. This is Sulfate-binding protein (sbp) from Escherichia coli (strain K12).